The sequence spans 443 residues: Exodeoxyribonuclease 7 large subunit (443 aa).

Belongs to the XseA family. Heterooligomer composed of large and small subunits.

It is found in the cytoplasm. It catalyses the reaction Exonucleolytic cleavage in either 5'- to 3'- or 3'- to 5'-direction to yield nucleoside 5'-phosphates.. Functionally, bidirectionally degrades single-stranded DNA into large acid-insoluble oligonucleotides, which are then degraded further into small acid-soluble oligonucleotides. This is Exodeoxyribonuclease 7 large subunit from Vibrio vulnificus (strain YJ016).